The primary structure comprises 199 residues: NADH-quinone oxidoreductase subunit C (199 aa).

Belongs to the complex I 30 kDa subunit family. As to quaternary structure, NDH-1 is composed of 14 different subunits. Subunits NuoB, C, D, E, F, and G constitute the peripheral sector of the complex.

It localises to the cell inner membrane. The catalysed reaction is a quinone + NADH + 5 H(+)(in) = a quinol + NAD(+) + 4 H(+)(out). Functionally, NDH-1 shuttles electrons from NADH, via FMN and iron-sulfur (Fe-S) centers, to quinones in the respiratory chain. The immediate electron acceptor for the enzyme in this species is believed to be ubiquinone. Couples the redox reaction to proton translocation (for every two electrons transferred, four hydrogen ions are translocated across the cytoplasmic membrane), and thus conserves the redox energy in a proton gradient. This is NADH-quinone oxidoreductase subunit C from Cupriavidus metallidurans (strain ATCC 43123 / DSM 2839 / NBRC 102507 / CH34) (Ralstonia metallidurans).